The sequence spans 505 residues: ATP-dependent RNA helicase HAS1 (505 aa).

Residues 1-37 (MATPSNKRSRDSESTEEPVVDEKSTSKQNNAAPEGEQ) are disordered. At Ser12 the chain carries Phosphoserine. A compositionally biased stretch (polar residues) spans 26 to 37 (SKQNNAAPEGEQ). The short motif at 42–70 (EKFEELKLSQPTLKAIEKMGFTTMTSVQA) is the Q motif element. The region spanning 73-249 (IPPLLAGRDV…RISLRPGPLF (177 aa)) is the Helicase ATP-binding domain. 86 to 93 (AKTGSGKT) is a binding site for ATP. Positions 196–199 (DEAD) match the DEAD box motif. Residues 263-433 (GLEQGYVVCD…NVQSQLEKLI (171 aa)) form the Helicase C-terminal domain. Residues 275-291 (KRFLLLFSFLKRNQKKK) carry the Bipartite nuclear localization signal motif.

It belongs to the DEAD box helicase family. DDX18/HAS1 subfamily. Interacts with RRP1. Associates in the nucleolus with the 60S and pre-60S ribosomal subunits. It has also been isolated with the nuclear pore complex. Phosphorylated by CDK1.

Its subcellular location is the nucleus. The protein resides in the nucleolus. The catalysed reaction is ATP + H2O = ADP + phosphate + H(+). In terms of biological role, ATP-dependent RNA helicase involved in 40S ribosomal subunit biogenesis. Required for the processing and cleavage of 35S pre-rRNA at sites A0, A1, and A2, leading to mature 18S rRNA. The polypeptide is ATP-dependent RNA helicase HAS1 (HAS1) (Saccharomyces cerevisiae (strain ATCC 204508 / S288c) (Baker's yeast)).